Here is a 324-residue protein sequence, read N- to C-terminus: Protein ChrB (324 aa).

Functionally, together with ChrA1, this protein reduces chromate accumulation and is essential for chromate resistance, possibly as a regulatory protein. This chain is Protein ChrB, found in Cupriavidus metallidurans (strain ATCC 43123 / DSM 2839 / NBRC 102507 / CH34) (Ralstonia metallidurans).